A 219-amino-acid chain; its full sequence is Uracil phosphoribosyltransferase 1 (219 aa).

Residues R33, R42, and 76 to 79 (DGRI) contribute to the GTP site. A 5-phospho-alpha-D-ribose 1-diphosphate-binding site is contributed by R86. A GTP-binding site is contributed by R103. Residue R111 participates in 5-phospho-alpha-D-ribose 1-diphosphate binding. Position 132 (R132) interacts with GTP. 5-phospho-alpha-D-ribose 1-diphosphate contacts are provided by residues D138 and 138 to 146 (DPMLATGGS). Y202 is a binding site for D-ribose 5-phosphate. Uracil contacts are provided by residues I203 and 208-210 (GDF). D209 serves as a coordination point for 5-phospho-alpha-D-ribose 1-diphosphate.

This sequence belongs to the UPRTase family. It depends on Mg(2+) as a cofactor.

It catalyses the reaction UMP + diphosphate = 5-phospho-alpha-D-ribose 1-diphosphate + uracil. It participates in pyrimidine metabolism; UMP biosynthesis via salvage pathway; UMP from uracil: step 1/1. Allosterically activated by GTP. Functionally, catalyzes the conversion of uracil and 5-phospho-alpha-D-ribose 1-diphosphate (PRPP) to UMP and diphosphate. This Schizosaccharomyces pombe (strain 972 / ATCC 24843) (Fission yeast) protein is Uracil phosphoribosyltransferase 1.